The following is a 109-amino-acid chain: UPF0060 membrane protein PA3275 (109 aa).

Helical transmembrane passes span 5-25 (FWFV…YLWL), 27-47 (LGKS…FALL), 59-79 (AYAA…AFVE), and 84-104 (LWSD…VLFG).

The protein belongs to the UPF0060 family.

It localises to the cell inner membrane. The protein is UPF0060 membrane protein PA3275 of Pseudomonas aeruginosa (strain ATCC 15692 / DSM 22644 / CIP 104116 / JCM 14847 / LMG 12228 / 1C / PRS 101 / PAO1).